Consider the following 184-residue polypeptide: Large ribosomal subunit protein uL6 (184 aa).

It belongs to the universal ribosomal protein uL6 family. Part of the 50S ribosomal subunit.

In terms of biological role, this protein binds to the 23S rRNA, and is important in its secondary structure. It is located near the subunit interface in the base of the L7/L12 stalk, and near the tRNA binding site of the peptidyltransferase center. This chain is Large ribosomal subunit protein uL6, found in Thermosipho africanus (strain TCF52B).